Reading from the N-terminus, the 1055-residue chain is TNF receptor-associated factor homolog 1a (1055 aa).

The tract at residues Met1–Asp56 is disordered. Over residues Ser37 to Ser46 the composition is skewed to polar residues. The region spanning Phe68–Val191 is the MATH domain. 4 disordered regions span residues Pro352–Asp380, Ala431–Tyr590, Phe603–Ile772, and Val820–Ser845. A compositionally biased stretch (basic and acidic residues) spans Ser433–Lys446. Residues Ala441–Lys496 are a coiled coil. The span at Lys447–Asn460 shows a compositional bias: basic residues. Residues Lys461–Val486 are compositionally biased toward basic and acidic residues. Residues Asp502–Ser513 are compositionally biased toward low complexity. The span at Arg524–Glu537 shows a compositional bias: basic and acidic residues. Over residues Met569–Ala586 the composition is skewed to polar residues. Over residues Gln657 to Val668 the composition is skewed to basic and acidic residues. Composition is skewed to polar residues over residues Lys723–Thr740 and Ser823–Ser845.

In terms of assembly, interacts with AHK3. Interacts with ATG6, SINAT1, SINAT2, SINAT5 and SINAT6.

The protein resides in the cytoplasm. Functions redundantly with TRAF1B in the regulation of plant immune response. Contributes to the turnover of the nucleotide-binding domain and leucine-rich repeat-containing (NB-LRR) immune receptors SNC1 and RPS2. May associate with an E3 ubiquitin-protein ligase complex, which modulates ubiquitination and subsequent degradation of NB-LRR immune sensors to maintain their homeostasis. Functions redundantly with TRAF1B in the regulation of autophagosome formation. Required for SINAT1- and SINAT2-mediated ubiquitination and destabilization of ATG6. Functions as a molecular adapter that helps to regulate autophagy by modulating ATG6 stability. This is TNF receptor-associated factor homolog 1a from Arabidopsis thaliana (Mouse-ear cress).